The chain runs to 623 residues: UvrABC system protein C (623 aa).

The GIY-YIG domain maps to G28 to V105. The UVR domain maps to T215 to V250.

It belongs to the UvrC family. Interacts with UvrB in an incision complex.

The protein resides in the cytoplasm. In terms of biological role, the UvrABC repair system catalyzes the recognition and processing of DNA lesions. UvrC both incises the 5' and 3' sides of the lesion. The N-terminal half is responsible for the 3' incision and the C-terminal half is responsible for the 5' incision. This is UvrABC system protein C from Ruegeria pomeroyi (strain ATCC 700808 / DSM 15171 / DSS-3) (Silicibacter pomeroyi).